A 480-amino-acid chain; its full sequence is Flotillin-like protein 2 (480 aa).

Cysteine 37 carries S-palmitoyl cysteine lipidation. Positions 237-257 form a coiled coil; the sequence is ENQREAEVAQANSELAKKKAA.

The protein belongs to the band 7/mec-2 family. Flotillin subfamily. Post-translationally, may be palmitoylated. As to expression, expressed in flowers in green pods. Primarily expressed in vascular tissues. Upon induction of nodulation, expansion of expression in the root cortex in the region of elongating root hairs, which will eventually become colonized by bacteria. Expressed in the infection zone in nodules.

Its subcellular location is the cell membrane. It localises to the membrane. It is found in the caveola. In terms of biological role, may act as a scaffolding protein within caveolar membranes, functionally participating in formation of caveolae or caveolae-like vesicles. Required for early symbiotic events and nodules formation. This Medicago truncatula (Barrel medic) protein is Flotillin-like protein 2 (FLOT2).